The primary structure comprises 277 residues: 3-methyl-2-oxobutanoate hydroxymethyltransferase (277 aa).

Aspartate 53 and aspartate 96 together coordinate Mg(2+). Residues 53–54, aspartate 96, and lysine 126 each bind 3-methyl-2-oxobutanoate; that span reads DS. Glutamate 128 lines the Mg(2+) pocket. The Proton acceptor role is filled by glutamate 195.

This sequence belongs to the PanB family. As to quaternary structure, homodecamer; pentamer of dimers. It depends on Mg(2+) as a cofactor.

It is found in the cytoplasm. It catalyses the reaction 3-methyl-2-oxobutanoate + (6R)-5,10-methylene-5,6,7,8-tetrahydrofolate + H2O = 2-dehydropantoate + (6S)-5,6,7,8-tetrahydrofolate. Its pathway is cofactor biosynthesis; (R)-pantothenate biosynthesis; (R)-pantoate from 3-methyl-2-oxobutanoate: step 1/2. In terms of biological role, catalyzes the reversible reaction in which hydroxymethyl group from 5,10-methylenetetrahydrofolate is transferred onto alpha-ketoisovalerate to form ketopantoate. The sequence is that of 3-methyl-2-oxobutanoate hydroxymethyltransferase from Chlorobium phaeobacteroides (strain DSM 266 / SMG 266 / 2430).